Consider the following 346-residue polypeptide: [LysW]-lysine/[LysW]-ornithine hydrolase (346 aa).

Histidine 68 is a binding site for Zn(2+). The active site involves aspartate 70. Aspartate 92 lines the Zn(2+) pocket. Residue glutamate 122 is the Proton acceptor of the active site. Residues glutamate 123, glutamate 146, and histidine 317 each coordinate Zn(2+).

This sequence belongs to the peptidase M20A family. LysK subfamily. Requires Zn(2+) as cofactor. The cofactor is Co(2+).

The protein resides in the cytoplasm. It carries out the reaction [amino-group carrier protein]-C-terminal-gamma-(L-lysyl)-L-glutamate + H2O = [amino-group carrier protein]-C-terminal-L-glutamate + L-lysine. The catalysed reaction is [amino-group carrier protein]-C-terminal-gamma-(L-ornithyl)-L-glutamate + H2O = [amino-group carrier protein]-C-terminal-L-glutamate + L-ornithine. It participates in amino-acid biosynthesis; L-lysine biosynthesis via AAA pathway; L-lysine from L-alpha-aminoadipate (Thermus route): step 5/5. Its pathway is amino-acid biosynthesis; L-arginine biosynthesis. Functionally, catalyzes the release of L-lysine from [LysW]-gamma-L-lysine and the release of L-ornithine from [LysW]-L-ornithine. This Saccharolobus islandicus (strain M.16.4 / Kamchatka #3) (Sulfolobus islandicus) protein is [LysW]-lysine/[LysW]-ornithine hydrolase.